A 354-amino-acid chain; its full sequence is Peptide chain release factor 1 (354 aa).

Gln-233 bears the N5-methylglutamine mark.

This sequence belongs to the prokaryotic/mitochondrial release factor family. In terms of processing, methylated by PrmC. Methylation increases the termination efficiency of RF1.

Its subcellular location is the cytoplasm. Peptide chain release factor 1 directs the termination of translation in response to the peptide chain termination codons UAG and UAA. This is Peptide chain release factor 1 from Clostridioides difficile (strain 630) (Peptoclostridium difficile).